The following is a 163-amino-acid chain: Superoxide dismutase [Mn] (163 aa).

4 residues coordinate Mn(2+): H2, H50, D134, and H138.

This sequence belongs to the iron/manganese superoxide dismutase family. Mn(2+) serves as cofactor.

The enzyme catalyses 2 superoxide + 2 H(+) = H2O2 + O2. In terms of biological role, destroys superoxide anion radicals which are normally produced within the cells and which are toxic to biological systems. This chain is Superoxide dismutase [Mn] (sodA), found in Mycobacterium kansasii.